The chain runs to 452 residues: Phosphoglucosamine mutase (452 aa).

Ser108 serves as the catalytic Phosphoserine intermediate. Residues Ser108, Asp247, Asp249, and Asp251 each coordinate Mg(2+). Ser108 carries the post-translational modification Phosphoserine.

Belongs to the phosphohexose mutase family. Mg(2+) serves as cofactor. Activated by phosphorylation.

It carries out the reaction alpha-D-glucosamine 1-phosphate = D-glucosamine 6-phosphate. In terms of biological role, catalyzes the conversion of glucosamine-6-phosphate to glucosamine-1-phosphate. In Burkholderia mallei (strain NCTC 10247), this protein is Phosphoglucosamine mutase.